Reading from the N-terminus, the 654-residue chain is tRNA 5-methylaminomethyl-2-thiouridine biosynthesis bifunctional protein MnmC (654 aa).

The segment at 1–235 (MSDFQHAQLD…KREMLSGTYQ (235 aa)) is tRNA (mnm(5)s(2)U34)-methyltransferase. Positions 261-654 (VGGGLAGCAS…LRDLVRGQRG (394 aa)) are FAD-dependent cmnm(5)s(2)U34 oxidoreductase.

This sequence in the N-terminal section; belongs to the methyltransferase superfamily. tRNA (mnm(5)s(2)U34)-methyltransferase family. In the C-terminal section; belongs to the DAO family. The cofactor is FAD.

It localises to the cytoplasm. It carries out the reaction 5-aminomethyl-2-thiouridine(34) in tRNA + S-adenosyl-L-methionine = 5-methylaminomethyl-2-thiouridine(34) in tRNA + S-adenosyl-L-homocysteine + H(+). Catalyzes the last two steps in the biosynthesis of 5-methylaminomethyl-2-thiouridine (mnm(5)s(2)U) at the wobble position (U34) in tRNA. Catalyzes the FAD-dependent demodification of cmnm(5)s(2)U34 to nm(5)s(2)U34, followed by the transfer of a methyl group from S-adenosyl-L-methionine to nm(5)s(2)U34, to form mnm(5)s(2)U34. The polypeptide is tRNA 5-methylaminomethyl-2-thiouridine biosynthesis bifunctional protein MnmC (Pseudomonas aeruginosa (strain ATCC 15692 / DSM 22644 / CIP 104116 / JCM 14847 / LMG 12228 / 1C / PRS 101 / PAO1)).